We begin with the raw amino-acid sequence, 788 residues long: Endonuclease MutS2 (788 aa).

332 to 339 (GPNTGGKT) lines the ATP pocket. A Smr domain is found at 713 to 788 (VDLRGMDAEE…GTGVTVVEIK (76 aa)).

Belongs to the DNA mismatch repair MutS family. MutS2 subfamily. Homodimer. Binds to stalled ribosomes, contacting rRNA.

Functionally, endonuclease that is involved in the suppression of homologous recombination and thus may have a key role in the control of bacterial genetic diversity. In terms of biological role, acts as a ribosome collision sensor, splitting the ribosome into its 2 subunits. Detects stalled/collided 70S ribosomes which it binds and splits by an ATP-hydrolysis driven conformational change. Acts upstream of the ribosome quality control system (RQC), a ribosome-associated complex that mediates the extraction of incompletely synthesized nascent chains from stalled ribosomes and their subsequent degradation. Probably generates substrates for RQC. The sequence is that of Endonuclease MutS2 from Clostridium botulinum (strain Loch Maree / Type A3).